The primary structure comprises 225 residues: MTNVLIVEDEQAIRRFLRTALEGDGMRVFEAETLQRGLLEAATRKPDLIILDLGLPDGDGIEFIRDLRQWSAVPVIVLSARSEESDKIAALDAGADDYLSKPFGIGELQARLRVALRRHSATTAPDPLVKFSDVTVDLAARVIHRGEEEVHLTPIEFRLLAVLLNNAGKVLTQRQLLNQVWGPNAVEHSHYLRIYMGHLRQKLEQDPARPRHFITETGIGYRFML.

Residues 3-116 (NVLIVEDEQA…ELQARLRVAL (114 aa)) enclose the Response regulatory domain. D52 bears the 4-aspartylphosphate mark. Residues 126–225 (DPLVKFSDVT…ETGIGYRFML (100 aa)) constitute a DNA-binding region (ompR/PhoB-type).

In terms of processing, phosphorylated by KdpD.

The protein localises to the cytoplasm. Functionally, member of the two-component regulatory system KdpD/KdpE involved in the regulation of the kdp operon. The chain is KDP operon transcriptional regulatory protein KdpE (kdpE) from Escherichia coli (strain K12).